The chain runs to 471 residues: Reticulon-2 (471 aa).

3 disordered regions span residues 1-137, 153-181, and 205-234; these read MGQV…ERPL, SAGS…ASEA, and QLSP…DDEP. Residues 14-25 show a composition bias toward low complexity; it reads APSTASSTPDST. Basic and acidic residues predominate over residues 32 to 43; it reads SDFRELHTAREF. Ser-44 bears the Phosphoserine mark. Composition is skewed to polar residues over residues 100-118 and 159-168; these read PQQS…LSQS and DSATSSSTPL. A compositionally biased stretch (acidic residues) spans 169–181; it reads ENEEPDGLEASEA. Residues 205–229 are compositionally biased toward polar residues; sequence QLSPSSGTPQAHTPSPQRSQDSNSG. A phosphoserine mark is found at Ser-226 and Ser-228. The Reticulon domain occupies 272–471; that stretch reads VADLLYWKDT…SVSGSKAKAE (200 aa). Transmembrane regions (helical) follow at residues 295–315 and 390–410; these read LLCL…LLGL and LLFY…LVIL.

Interacts with SPAST. Interacts with BACE1. Interacts (via first transmembrane domain) with ARL6IP5/GTRAP3-18. Interacts (via N-terminus) with SLC1A1/EAAC1; the interaction promotes cell surface expression of SLC1A1. Detected in skeletal and cardiac muscle (at protein level). Expressed predominantly in neural and muscular tissues.

It is found in the endoplasmic reticulum membrane. The protein localises to the sarcoplasmic reticulum membrane. It localises to the cell membrane. The protein resides in the sarcolemma. Its subcellular location is the T-tubule. It is found in the cytoplasm. The protein localises to the myofibril. It localises to the sarcomere. The protein resides in the z line. Its subcellular location is the cytoskeleton. Its function is as follows. Inhibits amyloid precursor protein processing, probably by blocking BACE1 activity. Enhances trafficking of the glutamate transporter SLC1A1/EAAC1 from the endoplasmic reticulum to the cell surface. Plays a role in the translocation of SLC2A4/GLUT4 from intracellular membranes to the cell membrane which facilitates the uptake of glucose into the cell. This is Reticulon-2 from Mus musculus (Mouse).